Here is a 513-residue protein sequence, read N- to C-terminus: Putative ADP-ribosyl glycohydrolase L444 (513 aa).

The span at 1–23 (MSDKIQSRESKTTKPTKTEKISD) shows a compositional bias: basic and acidic residues. The disordered stretch occupies residues 1 to 33 (MSDKIQSRESKTTKPTKTEKISDKSGNLSQVKS). The segment covering 24 to 33 (KSGNLSQVKS) has biased composition (polar residues).

This sequence belongs to the ADP-ribosylglycohydrolase family.

This Acanthamoeba polyphaga mimivirus (APMV) protein is Putative ADP-ribosyl glycohydrolase L444.